Here is a 273-residue protein sequence, read N- to C-terminus: 3-methyl-2-oxobutanoate hydroxymethyltransferase (273 aa).

2 residues coordinate Mg(2+): D53 and D92. 3-methyl-2-oxobutanoate is bound by residues 53–54 (DS), D92, and K120. Residue E122 coordinates Mg(2+). E189 functions as the Proton acceptor in the catalytic mechanism.

This sequence belongs to the PanB family. Homodecamer; pentamer of dimers. Mg(2+) is required as a cofactor.

The protein localises to the cytoplasm. It catalyses the reaction 3-methyl-2-oxobutanoate + (6R)-5,10-methylene-5,6,7,8-tetrahydrofolate + H2O = 2-dehydropantoate + (6S)-5,6,7,8-tetrahydrofolate. The protein operates within cofactor biosynthesis; (R)-pantothenate biosynthesis; (R)-pantoate from 3-methyl-2-oxobutanoate: step 1/2. Its function is as follows. Catalyzes the reversible reaction in which hydroxymethyl group from 5,10-methylenetetrahydrofolate is transferred onto alpha-ketoisovalerate to form ketopantoate. This chain is 3-methyl-2-oxobutanoate hydroxymethyltransferase, found in Cupriavidus taiwanensis (strain DSM 17343 / BCRC 17206 / CCUG 44338 / CIP 107171 / LMG 19424 / R1) (Ralstonia taiwanensis (strain LMG 19424)).